Here is a 388-residue protein sequence, read N- to C-terminus: Putative pyridoxal phosphate-dependent aminotransferase EpsN (388 aa).

At lysine 190 the chain carries N6-(pyridoxal phosphate)lysine.

This sequence belongs to the DegT/DnrJ/EryC1 family. Requires pyridoxal 5'-phosphate as cofactor.

Functionally, may be involved in the production of the exopolysaccharide (EPS) component of the extracellular matrix during biofilm formation. EPS is responsible for the adhesion of chains of cells into bundles. The chain is Putative pyridoxal phosphate-dependent aminotransferase EpsN (epsN) from Bacillus subtilis (strain 168).